The primary structure comprises 450 residues: tRNA modification GTPase MnmE (450 aa).

(6S)-5-formyl-5,6,7,8-tetrahydrofolate is bound by residues K21, E78, and K117. Positions 213 to 376 (GHALSIIGKP…LSQKISAFFP (164 aa)) constitute a TrmE-type G domain. N223 contacts K(+). Residues 223 to 228 (NAGKSS), 242 to 248 (SDIKGTT), and 267 to 270 (DTAG) each bind GTP. S227 is a Mg(2+) binding site. Residues S242, I244, and T247 each coordinate K(+). T248 contributes to the Mg(2+) binding site. K450 serves as a coordination point for (6S)-5-formyl-5,6,7,8-tetrahydrofolate.

The protein belongs to the TRAFAC class TrmE-Era-EngA-EngB-Septin-like GTPase superfamily. TrmE GTPase family. Homodimer. Heterotetramer of two MnmE and two MnmG subunits. Requires K(+) as cofactor.

The protein localises to the cytoplasm. Exhibits a very high intrinsic GTPase hydrolysis rate. Involved in the addition of a carboxymethylaminomethyl (cmnm) group at the wobble position (U34) of certain tRNAs, forming tRNA-cmnm(5)s(2)U34. The protein is tRNA modification GTPase MnmE of Helicobacter acinonychis (strain Sheeba).